Here is a 1398-residue protein sequence, read N- to C-terminus: Protein timeless (1398 aa).

The tract at residues 237-268 (VSTLQKLLSLWFEASLSESSEDNESNTSPPKQ) is necessary for normal circadian rhythm. Disordered stretches follow at residues 254 to 300 (ESSE…GGMR), 322 to 452 (ARVP…QKFN), 478 to 555 (TKGK…LRRK), 1127 to 1147 (TASS…SSVS), and 1220 to 1239 (NHRT…SSTT). Low complexity predominate over residues 273-290 (SSPMLTSDPTSDSSDNGS). Gly residues predominate over residues 291-300 (NGRGMGGGMR). The segment covering 338–355 (MTGNDSEQPGSPEQSQPA) has biased composition (polar residues). Basic and acidic residues predominate over residues 365-375 (EDQRHRQLNEH). Acidic residues predominate over residues 376–390 (GEEDEDEDEVEEEEY). 3 stretches are compositionally biased toward polar residues: residues 400-421 (LNLT…SSAP), 440-452 (ASTS…QKFN), and 504-515 (QVENQESISTSS). Low complexity predominate over residues 522-531 (QGKPQHQKPP). The short motif at 550–560 (KELRRKKLVKR) is the Nuclear localization signal element.

This sequence belongs to the timeless family. As to quaternary structure, forms a heterodimer with period (PER); the complex then translocates into the nucleus. Post-translationally, phosphorylated with a circadian rhythmicity. As to expression, expressed in head, photoreceptors, lateral neurons and glial cells in the lamina and medulla of the optic lobes. Expression follows a light-dark cycle, levels show a significant decrease at the end of the night and then remain low throughout the light period (at protein level).

It localises to the nucleus. The protein localises to the cytoplasm. The protein resides in the perinuclear region. Its function is as follows. Required for the production of circadian rhythms. The biological cycle depends on the rhythmic formation and nuclear localization of the TIM-PER complex. Light induces the degradation of TIM, which promotes elimination of PER. Nuclear activity of the heterodimer coordinatively regulates PER and TIM transcription through a negative feedback loop. Behaves as a negative element in circadian transcriptional loop. Does not appear to bind DNA, suggesting indirect transcriptional inhibition. This is Protein timeless (tim) from Drosophila melanogaster (Fruit fly).